A 168-amino-acid chain; its full sequence is Protein-export protein SecB (168 aa).

Belongs to the SecB family. As to quaternary structure, homotetramer, a dimer of dimers. One homotetramer interacts with 1 SecA dimer.

The protein localises to the cytoplasm. Functionally, one of the proteins required for the normal export of preproteins out of the cell cytoplasm. It is a molecular chaperone that binds to a subset of precursor proteins, maintaining them in a translocation-competent state. It also specifically binds to its receptor SecA. The sequence is that of Protein-export protein SecB from Glaesserella parasuis serovar 5 (strain SH0165) (Haemophilus parasuis).